A 168-amino-acid chain; its full sequence is G/U mismatch-specific DNA glycosylase (168 aa).

The protein belongs to the uracil-DNA glycosylase (UDG) superfamily. TDG/mug family. In terms of assembly, binds DNA as a monomer.

It localises to the cytoplasm. It carries out the reaction Specifically hydrolyzes mismatched double-stranded DNA and polynucleotides, releasing free uracil.. In terms of biological role, excises ethenocytosine and uracil, which can arise by alkylation or deamination of cytosine, respectively, from the corresponding mispairs with guanine in ds-DNA. It is capable of hydrolyzing the carbon-nitrogen bond between the sugar-phosphate backbone of the DNA and the mispaired base. The complementary strand guanine functions in substrate recognition. Required for DNA damage lesion repair in stationary-phase cells. In Klebsiella pneumoniae subsp. pneumoniae (strain ATCC 700721 / MGH 78578), this protein is G/U mismatch-specific DNA glycosylase.